Here is a 262-residue protein sequence, read N- to C-terminus: Acyl-[acyl-carrier-protein]--UDP-N-acetylglucosamine O-acyltransferase (262 aa).

Belongs to the transferase hexapeptide repeat family. LpxA subfamily. In terms of assembly, homotrimer.

The protein localises to the cytoplasm. It catalyses the reaction a (3R)-hydroxyacyl-[ACP] + UDP-N-acetyl-alpha-D-glucosamine = a UDP-3-O-[(3R)-3-hydroxyacyl]-N-acetyl-alpha-D-glucosamine + holo-[ACP]. It participates in glycolipid biosynthesis; lipid IV(A) biosynthesis; lipid IV(A) from (3R)-3-hydroxytetradecanoyl-[acyl-carrier-protein] and UDP-N-acetyl-alpha-D-glucosamine: step 1/6. In terms of biological role, involved in the biosynthesis of lipid A, a phosphorylated glycolipid that anchors the lipopolysaccharide to the outer membrane of the cell. This chain is Acyl-[acyl-carrier-protein]--UDP-N-acetylglucosamine O-acyltransferase, found in Burkholderia ambifaria (strain ATCC BAA-244 / DSM 16087 / CCUG 44356 / LMG 19182 / AMMD) (Burkholderia cepacia (strain AMMD)).